The following is a 167-amino-acid chain: Large ribosomal subunit protein bL9 (167 aa).

It belongs to the bacterial ribosomal protein bL9 family.

In terms of biological role, binds to the 23S rRNA. The chain is Large ribosomal subunit protein bL9 from Chlamydia muridarum (strain MoPn / Nigg).